The chain runs to 454 residues: Bifunctional protein GlmU (454 aa).

The interval M1 to K225 is pyrophosphorylase. UDP-N-acetyl-alpha-D-glucosamine-binding positions include L6–G9, K20, Q71, G76–T77, Y98–D100, G135, E150, N165, and N223. D100 provides a ligand contact to Mg(2+). N223 lines the Mg(2+) pocket. The interval V226–A246 is linker. The tract at residues G247–K454 is N-acetyltransferase. Residues R329 and K347 each contribute to the UDP-N-acetyl-alpha-D-glucosamine site. H359 serves as the catalytic Proton acceptor. 2 residues coordinate UDP-N-acetyl-alpha-D-glucosamine: Y362 and N373. Residues A376, N382–Y383, S401, A419, and R436 contribute to the acetyl-CoA site.

The protein in the N-terminal section; belongs to the N-acetylglucosamine-1-phosphate uridyltransferase family. This sequence in the C-terminal section; belongs to the transferase hexapeptide repeat family. As to quaternary structure, homotrimer. Mg(2+) is required as a cofactor.

The protein resides in the cytoplasm. The enzyme catalyses alpha-D-glucosamine 1-phosphate + acetyl-CoA = N-acetyl-alpha-D-glucosamine 1-phosphate + CoA + H(+). It carries out the reaction N-acetyl-alpha-D-glucosamine 1-phosphate + UTP + H(+) = UDP-N-acetyl-alpha-D-glucosamine + diphosphate. Its pathway is nucleotide-sugar biosynthesis; UDP-N-acetyl-alpha-D-glucosamine biosynthesis; N-acetyl-alpha-D-glucosamine 1-phosphate from alpha-D-glucosamine 6-phosphate (route II): step 2/2. It functions in the pathway nucleotide-sugar biosynthesis; UDP-N-acetyl-alpha-D-glucosamine biosynthesis; UDP-N-acetyl-alpha-D-glucosamine from N-acetyl-alpha-D-glucosamine 1-phosphate: step 1/1. The protein operates within bacterial outer membrane biogenesis; LPS lipid A biosynthesis. Its function is as follows. Catalyzes the last two sequential reactions in the de novo biosynthetic pathway for UDP-N-acetylglucosamine (UDP-GlcNAc). The C-terminal domain catalyzes the transfer of acetyl group from acetyl coenzyme A to glucosamine-1-phosphate (GlcN-1-P) to produce N-acetylglucosamine-1-phosphate (GlcNAc-1-P), which is converted into UDP-GlcNAc by the transfer of uridine 5-monophosphate (from uridine 5-triphosphate), a reaction catalyzed by the N-terminal domain. This Cupriavidus metallidurans (strain ATCC 43123 / DSM 2839 / NBRC 102507 / CH34) (Ralstonia metallidurans) protein is Bifunctional protein GlmU.